Reading from the N-terminus, the 313-residue chain is 4-hydroxy-3-methylbut-2-enyl diphosphate reductase (313 aa).

C20 contacts [4Fe-4S] cluster. Positions 49 and 82 each coordinate (2E)-4-hydroxy-3-methylbut-2-enyl diphosphate. Positions 49 and 82 each coordinate dimethylallyl diphosphate. Isopentenyl diphosphate is bound by residues H49 and H82. C104 lines the [4Fe-4S] cluster pocket. A (2E)-4-hydroxy-3-methylbut-2-enyl diphosphate-binding site is contributed by H132. H132 is a binding site for dimethylallyl diphosphate. H132 contributes to the isopentenyl diphosphate binding site. E134 acts as the Proton donor in catalysis. T172 serves as a coordination point for (2E)-4-hydroxy-3-methylbut-2-enyl diphosphate. Residue C201 participates in [4Fe-4S] cluster binding. S229, S230, N231, and S273 together coordinate (2E)-4-hydroxy-3-methylbut-2-enyl diphosphate. Dimethylallyl diphosphate is bound by residues S229, S230, N231, and S273. Residues S229, S230, N231, and S273 each contribute to the isopentenyl diphosphate site.

The protein belongs to the IspH family. It depends on [4Fe-4S] cluster as a cofactor.

It catalyses the reaction isopentenyl diphosphate + 2 oxidized [2Fe-2S]-[ferredoxin] + H2O = (2E)-4-hydroxy-3-methylbut-2-enyl diphosphate + 2 reduced [2Fe-2S]-[ferredoxin] + 2 H(+). It carries out the reaction dimethylallyl diphosphate + 2 oxidized [2Fe-2S]-[ferredoxin] + H2O = (2E)-4-hydroxy-3-methylbut-2-enyl diphosphate + 2 reduced [2Fe-2S]-[ferredoxin] + 2 H(+). It functions in the pathway isoprenoid biosynthesis; dimethylallyl diphosphate biosynthesis; dimethylallyl diphosphate from (2E)-4-hydroxy-3-methylbutenyl diphosphate: step 1/1. It participates in isoprenoid biosynthesis; isopentenyl diphosphate biosynthesis via DXP pathway; isopentenyl diphosphate from 1-deoxy-D-xylulose 5-phosphate: step 6/6. Functionally, catalyzes the conversion of 1-hydroxy-2-methyl-2-(E)-butenyl 4-diphosphate (HMBPP) into a mixture of isopentenyl diphosphate (IPP) and dimethylallyl diphosphate (DMAPP). Acts in the terminal step of the DOXP/MEP pathway for isoprenoid precursor biosynthesis. The sequence is that of 4-hydroxy-3-methylbut-2-enyl diphosphate reductase from Desulfotalea psychrophila (strain LSv54 / DSM 12343).